The following is a 158-amino-acid chain: Crossover junction endodeoxyribonuclease RuvC (158 aa).

Residues Asp7, Glu66, and Asp139 contribute to the active site. The Mg(2+) site is built by Asp7, Glu66, and Asp139.

It belongs to the RuvC family. As to quaternary structure, homodimer which binds Holliday junction (HJ) DNA. The HJ becomes 2-fold symmetrical on binding to RuvC with unstacked arms; it has a different conformation from HJ DNA in complex with RuvA. In the full resolvosome a probable DNA-RuvA(4)-RuvB(12)-RuvC(2) complex forms which resolves the HJ. Mg(2+) is required as a cofactor.

The protein localises to the cytoplasm. It carries out the reaction Endonucleolytic cleavage at a junction such as a reciprocal single-stranded crossover between two homologous DNA duplexes (Holliday junction).. The RuvA-RuvB-RuvC complex processes Holliday junction (HJ) DNA during genetic recombination and DNA repair. Endonuclease that resolves HJ intermediates. Cleaves cruciform DNA by making single-stranded nicks across the HJ at symmetrical positions within the homologous arms, yielding a 5'-phosphate and a 3'-hydroxyl group; requires a central core of homology in the junction. The consensus cleavage sequence is 5'-(A/T)TT(C/G)-3'. Cleavage occurs on the 3'-side of the TT dinucleotide at the point of strand exchange. HJ branch migration catalyzed by RuvA-RuvB allows RuvC to scan DNA until it finds its consensus sequence, where it cleaves and resolves the cruciform DNA. The chain is Crossover junction endodeoxyribonuclease RuvC from Campylobacter hominis (strain ATCC BAA-381 / DSM 21671 / CCUG 45161 / LMG 19568 / NCTC 13146 / CH001A).